The sequence spans 245 residues: Ribonuclease PH (245 aa).

Residues Arg93 and 131–133 (GTR) contribute to the phosphate site.

The protein belongs to the RNase PH family. Homohexameric ring arranged as a trimer of dimers.

The enzyme catalyses tRNA(n+1) + phosphate = tRNA(n) + a ribonucleoside 5'-diphosphate. Functionally, phosphorolytic 3'-5' exoribonuclease that plays an important role in tRNA 3'-end maturation. Removes nucleotide residues following the 3'-CCA terminus of tRNAs; can also add nucleotides to the ends of RNA molecules by using nucleoside diphosphates as substrates, but this may not be physiologically important. Probably plays a role in initiation of 16S rRNA degradation (leading to ribosome degradation) during starvation. The sequence is that of Ribonuclease PH from Corynebacterium glutamicum (strain ATCC 13032 / DSM 20300 / JCM 1318 / BCRC 11384 / CCUG 27702 / LMG 3730 / NBRC 12168 / NCIMB 10025 / NRRL B-2784 / 534).